A 556-amino-acid chain; its full sequence is Dihydroxy-acid dehydratase (556 aa).

Position 78 (Asp-78) interacts with Mg(2+). Residue Cys-119 coordinates [2Fe-2S] cluster. 2 residues coordinate Mg(2+): Asp-120 and Lys-121. Lys-121 is modified (N6-carboxylysine). Cys-195 serves as a coordination point for [2Fe-2S] cluster. Residue Glu-446 participates in Mg(2+) binding. Ser-472 serves as the catalytic Proton acceptor.

Belongs to the IlvD/Edd family. In terms of assembly, homodimer. Requires [2Fe-2S] cluster as cofactor. The cofactor is Mg(2+).

The catalysed reaction is (2R)-2,3-dihydroxy-3-methylbutanoate = 3-methyl-2-oxobutanoate + H2O. The enzyme catalyses (2R,3R)-2,3-dihydroxy-3-methylpentanoate = (S)-3-methyl-2-oxopentanoate + H2O. The protein operates within amino-acid biosynthesis; L-isoleucine biosynthesis; L-isoleucine from 2-oxobutanoate: step 3/4. Its pathway is amino-acid biosynthesis; L-valine biosynthesis; L-valine from pyruvate: step 3/4. Its function is as follows. Functions in the biosynthesis of branched-chain amino acids. Catalyzes the dehydration of (2R,3R)-2,3-dihydroxy-3-methylpentanoate (2,3-dihydroxy-3-methylvalerate) into 2-oxo-3-methylpentanoate (2-oxo-3-methylvalerate) and of (2R)-2,3-dihydroxy-3-methylbutanoate (2,3-dihydroxyisovalerate) into 2-oxo-3-methylbutanoate (2-oxoisovalerate), the penultimate precursor to L-isoleucine and L-valine, respectively. The protein is Dihydroxy-acid dehydratase of Desulfatibacillum aliphaticivorans.